Reading from the N-terminus, the 209-residue chain is Glutathione S-transferase 1-1 (209 aa).

The GST N-terminal domain maps to 1–81 (MADFYYLPGS…YLVEKYGKTD (81 aa)). Glutathione-binding positions include S10, 51-53 (HTI), and 65-67 (ESR). The region spanning 87–209 (CPKKRAVINQ…GCLEFKKYFE (123 aa)) is the GST C-terminal domain.

The protein belongs to the GST superfamily. Theta family. Homodimer.

It catalyses the reaction RX + glutathione = an S-substituted glutathione + a halide anion + H(+). The enzyme catalyses 1,1,1-trichloro-2,2-bis(4-chlorophenyl)ethane = 1,1-dichloro-2,2-bis(4-chlorophenyl)ethylene + chloride + H(+). In terms of biological role, conjugation of reduced glutathione to a wide number of exogenous and endogenous hydrophobic electrophiles. Has DDT dehydrochlorinase activity. This Drosophila simulans (Fruit fly) protein is Glutathione S-transferase 1-1 (GstD1).